A 433-amino-acid polypeptide reads, in one-letter code: Tubulin epsilon and delta complex protein 2 (433 aa).

Disordered regions lie at residues 45-69 (TGTRALKPPPGPETNGEDPLPACTP), 95-169 (TKAG…VGMG), and 326-345 (QPPRPCPVGRPPGASPSCGG). Residues 107–120 (KSRSIVTSSGTTAS) show a composition bias toward polar residues. A Phosphoserine modification is found at Ser-159. The segment covering 327-339 (PPRPCPVGRPPGA) has biased composition (pro residues).

As to quaternary structure, interacts with TEDC1. Found in a complex with TEDC1, TEDC2, TUBE1 and TUBD1.

The protein resides in the cell projection. It is found in the cilium. Its subcellular location is the cytoplasm. The protein localises to the cytoskeleton. It localises to the microtubule organizing center. The protein resides in the centrosome. It is found in the centriole. Functionally, acts as a positive regulator of ciliary hedgehog signaling. Required for centriole stability. The polypeptide is Tubulin epsilon and delta complex protein 2 (Homo sapiens (Human)).